Here is a 120-residue protein sequence, read N- to C-terminus: NAD(P)H-quinone oxidoreductase subunit 3, chloroplastic (120 aa).

3 consecutive transmembrane segments (helical) span residues 9-29 (IFWAFLIISSVIPILAFLISG), 64-84 (MFALVFVVFDVETVFLYPWAM), and 88-108 (VLGLSVFIEALIFVLILIVGS).

It belongs to the complex I subunit 3 family. In terms of assembly, NDH is composed of at least 16 different subunits, 5 of which are encoded in the nucleus.

The protein localises to the plastid. Its subcellular location is the chloroplast thylakoid membrane. The enzyme catalyses a plastoquinone + NADH + (n+1) H(+)(in) = a plastoquinol + NAD(+) + n H(+)(out). The catalysed reaction is a plastoquinone + NADPH + (n+1) H(+)(in) = a plastoquinol + NADP(+) + n H(+)(out). Its function is as follows. NDH shuttles electrons from NAD(P)H:plastoquinone, via FMN and iron-sulfur (Fe-S) centers, to quinones in the photosynthetic chain and possibly in a chloroplast respiratory chain. The immediate electron acceptor for the enzyme in this species is believed to be plastoquinone. Couples the redox reaction to proton translocation, and thus conserves the redox energy in a proton gradient. In Manihot esculenta (Cassava), this protein is NAD(P)H-quinone oxidoreductase subunit 3, chloroplastic.